Consider the following 147-residue polypeptide: Thyrotropin subunit beta (147 aa).

The N-terminal stretch at 1–20 (MRVVLLASAVLCLLAGQVLS) is a signal peptide. Intrachain disulfides connect cysteine 22–cysteine 72, cysteine 36–cysteine 87, cysteine 39–cysteine 126, cysteine 47–cysteine 103, cysteine 51–cysteine 105, and cysteine 108–cysteine 115. Asparagine 43 carries N-linked (GlcNAc...) asparagine glycosylation.

The protein belongs to the glycoprotein hormones subunit beta family. In terms of assembly, heterodimer of a common alpha chain and a unique beta chain which confers biological specificity to thyrotropin, lutropin, follitropin and gonadotropin.

It is found in the secreted. Its function is as follows. Indispensable for the control of thyroid structure and metabolism. May play some role in the biological processes of the immature fishes. The protein is Thyrotropin subunit beta (tshb) of Anguilla anguilla (European freshwater eel).